Here is a 265-residue protein sequence, read N- to C-terminus: AT-hook motif nuclear-localized protein 18 (265 aa).

A disordered region spans residues 1–75 (MDEVSRSHTP…AGSKNKPKAP (75 aa)). Over residues 19-30 (HYHHQNAGRQKR) the composition is skewed to basic residues. A DNA-binding region (a.T hook) is located at residues 59–71 (RRPRGRPAGSKNK). Residues 83-217 (ANAFRCHVME…EEEETEREID (135 aa)) enclose the PPC domain.

It is found in the nucleus. In terms of biological role, transcription factor that specifically binds AT-rich DNA sequences related to the nuclear matrix attachment regions (MARs). Acts redundantly with AHL22, AHL27 and AHL29 in the regulation of flowering and regulation of the hypocotyl elongation. In Arabidopsis thaliana (Mouse-ear cress), this protein is AT-hook motif nuclear-localized protein 18.